We begin with the raw amino-acid sequence, 364 residues long: Chorismate synthase (364 aa).

Arg48 and Arg54 together coordinate NADP(+). Residues 125–127, 238–239, Gly278, 293–297, and Arg319 each bind FMN; these read RSS, NA, and KPTSS.

Belongs to the chorismate synthase family. As to quaternary structure, homotetramer. FMNH2 serves as cofactor.

The enzyme catalyses 5-O-(1-carboxyvinyl)-3-phosphoshikimate = chorismate + phosphate. It participates in metabolic intermediate biosynthesis; chorismate biosynthesis; chorismate from D-erythrose 4-phosphate and phosphoenolpyruvate: step 7/7. Functionally, catalyzes the anti-1,4-elimination of the C-3 phosphate and the C-6 proR hydrogen from 5-enolpyruvylshikimate-3-phosphate (EPSP) to yield chorismate, which is the branch point compound that serves as the starting substrate for the three terminal pathways of aromatic amino acid biosynthesis. This reaction introduces a second double bond into the aromatic ring system. This is Chorismate synthase from Shewanella frigidimarina (strain NCIMB 400).